The following is a 316-amino-acid chain: Ferrochelatase (316 aa).

Fe cation is bound by residues His188 and Glu269.

The protein belongs to the ferrochelatase family.

It is found in the cytoplasm. It carries out the reaction heme b + 2 H(+) = protoporphyrin IX + Fe(2+). It participates in porphyrin-containing compound metabolism; protoheme biosynthesis; protoheme from protoporphyrin-IX: step 1/1. In terms of biological role, catalyzes the ferrous insertion into protoporphyrin IX. The sequence is that of Ferrochelatase from Wolinella succinogenes (strain ATCC 29543 / DSM 1740 / CCUG 13145 / JCM 31913 / LMG 7466 / NCTC 11488 / FDC 602W) (Vibrio succinogenes).